A 220-amino-acid polypeptide reads, in one-letter code: Ribosomal RNA small subunit methyltransferase G 1 (220 aa).

S-adenosyl-L-methionine contacts are provided by G79, F84, and R150.

This sequence belongs to the methyltransferase superfamily. RNA methyltransferase RsmG family.

The protein resides in the cytoplasm. The catalysed reaction is guanosine(527) in 16S rRNA + S-adenosyl-L-methionine = N(7)-methylguanosine(527) in 16S rRNA + S-adenosyl-L-homocysteine. In terms of biological role, specifically methylates the N7 position of guanine in position 527 of 16S rRNA. This is Ribosomal RNA small subunit methyltransferase G 1 from Syntrophobacter fumaroxidans (strain DSM 10017 / MPOB).